The sequence spans 357 residues: Uroporphyrinogen decarboxylase (357 aa).

Substrate-binding positions include 30 to 34 (RQAGR), aspartate 79, tyrosine 154, serine 209, and histidine 336.

This sequence belongs to the uroporphyrinogen decarboxylase family. In terms of assembly, homodimer.

It is found in the cytoplasm. It catalyses the reaction uroporphyrinogen III + 4 H(+) = coproporphyrinogen III + 4 CO2. Its pathway is porphyrin-containing compound metabolism; protoporphyrin-IX biosynthesis; coproporphyrinogen-III from 5-aminolevulinate: step 4/4. Catalyzes the decarboxylation of four acetate groups of uroporphyrinogen-III to yield coproporphyrinogen-III. The protein is Uroporphyrinogen decarboxylase of Mycobacterium leprae (strain Br4923).